The primary structure comprises 203 residues: Guanylate kinase (203 aa).

A Guanylate kinase-like domain is found at 3 to 181 (GTLYIVAAPS…AVSEMCAIFT (179 aa)). 10-17 (APSGAGKS) serves as a coordination point for ATP.

It belongs to the guanylate kinase family.

The protein localises to the cytoplasm. The enzyme catalyses GMP + ATP = GDP + ADP. Functionally, essential for recycling GMP and indirectly, cGMP. The chain is Guanylate kinase from Xanthomonas campestris pv. campestris (strain 8004).